A 901-amino-acid polypeptide reads, in one-letter code: Aconitate hydratase A (901 aa).

Residues cysteine 443, cysteine 509, and cysteine 512 each contribute to the [4Fe-4S] cluster site.

This sequence belongs to the aconitase/IPM isomerase family. As to quaternary structure, monomer. The cofactor is [4Fe-4S] cluster.

The enzyme catalyses citrate = D-threo-isocitrate. It carries out the reaction (2S,3R)-3-hydroxybutane-1,2,3-tricarboxylate = 2-methyl-cis-aconitate + H2O. It functions in the pathway carbohydrate metabolism; tricarboxylic acid cycle; isocitrate from oxaloacetate: step 2/2. It participates in organic acid metabolism; propanoate degradation. Involved in the catabolism of short chain fatty acids (SCFA) via the tricarboxylic acid (TCA)(acetyl degradation route) and probably the 2-methylcitrate cycle I (propionate degradation route). Catalyzes the reversible isomerization of citrate to isocitrate via cis-aconitate. Could catalyze the hydration of 2-methyl-cis-aconitate to yield (2R,3S)-2-methylisocitrate. The apo form of AcnA functions as a RNA-binding regulatory protein. This chain is Aconitate hydratase A (acnA), found in Staphylococcus aureus (strain COL).